A 503-amino-acid chain; its full sequence is Lysine--tRNA ligase (503 aa).

Mg(2+) is bound by residues Glu414 and Glu421.

This sequence belongs to the class-II aminoacyl-tRNA synthetase family. In terms of assembly, homodimer. The cofactor is Mg(2+).

The protein localises to the cytoplasm. The enzyme catalyses tRNA(Lys) + L-lysine + ATP = L-lysyl-tRNA(Lys) + AMP + diphosphate. This Neisseria meningitidis serogroup B (strain ATCC BAA-335 / MC58) protein is Lysine--tRNA ligase.